We begin with the raw amino-acid sequence, 366 residues long: Ribosomal RNA large subunit methyltransferase M (366 aa).

S-adenosyl-L-methionine contacts are provided by residues S188, 221-224, D240, D260, and D277; that span reads CPGG. K306 functions as the Proton acceptor in the catalytic mechanism.

This sequence belongs to the class I-like SAM-binding methyltransferase superfamily. RNA methyltransferase RlmE family. RlmM subfamily. As to quaternary structure, monomer.

The protein localises to the cytoplasm. It carries out the reaction cytidine(2498) in 23S rRNA + S-adenosyl-L-methionine = 2'-O-methylcytidine(2498) in 23S rRNA + S-adenosyl-L-homocysteine + H(+). Catalyzes the 2'-O-methylation at nucleotide C2498 in 23S rRNA. This chain is Ribosomal RNA large subunit methyltransferase M, found in Salmonella agona (strain SL483).